The following is a 358-amino-acid chain: SPbeta prophage-derived probable integrase/recombinase YopP (358 aa).

One can recognise a Core-binding (CB) domain in the interval 23 to 114; the sequence is NKDIRSSSGN…SLKMLYTYLE (92 aa). Residues 137-319 enclose the Tyr recombinase domain; that stretch reads KNWDKTTQTE…NIANSAGVTM (183 aa). Residues Arg-178, Lys-206, His-268, and His-295 contribute to the active site. Tyr-304 acts as the O-(3'-phospho-DNA)-tyrosine intermediate in catalysis.

Belongs to the 'phage' integrase family.

Its function is as follows. Probable recombinase that does not seem to have a role in chromosome dimer resolution per se but rather may have some facilitative role during chromosome partitioning in general. This chain is SPbeta prophage-derived probable integrase/recombinase YopP (yopP), found in Bacillus subtilis (strain 168).